Reading from the N-terminus, the 268-residue chain is Homeobox protein Hox-C4a (268 aa).

Residues 70–129 form a disordered region; sequence PEPDTQRGHGLPHAGHLLGKGQSASCEPPPLPLSPATPSAASSACNQATPEHPNSSASAK. Low complexity-rich tracts occupy residues 77–95 and 105–114; these read GHGL…SASC and ATPSAASSAC. Positions 115–128 are enriched in polar residues; sequence NQATPEHPNSSASA. Residues 133 to 138 carry the Antp-type hexapeptide motif; sequence VYPWMK. A DNA-binding region (homeobox) is located at residues 154 to 213; the sequence is PKRSRTAYTRQQVLELEKEFHYNRYLTRRRRIEIAHSLVLSERQIKIWFQNRRMKWKKDH. Positions 212 to 268 are disordered; the sequence is DHRLPNTKVRSSSSTGISSGSNTSSAAGVVAAASTTNTMSASEDLSGTERGEDITRL. A compositionally biased stretch (low complexity) spans 222 to 253; sequence SSSSTGISSGSNTSSAAGVVAAASTTNTMSAS. Over residues 258 to 268 the composition is skewed to basic and acidic residues; that stretch reads GTERGEDITRL.

It belongs to the Antp homeobox family. Deformed subfamily.

It localises to the nucleus. Functionally, sequence-specific transcription factor which is part of a developmental regulatory system that provides cells with specific positional identities on the anterior-posterior axis. The protein is Homeobox protein Hox-C4a (hoxc4a) of Danio rerio (Zebrafish).